A 560-amino-acid chain; its full sequence is Choline/ethanolamine transporter FLVCR1 (560 aa).

Residues 1–22 (MVKLNDEEGAAMAPGHQPTNGY) are disordered. Topologically, residues 1–99 (MVKLNDEEGA…TPGTEGSPAP (99 aa)) are cytoplasmic. Serine 56 is subject to Phosphoserine. A disordered region spans residues 68–99 (QTPLAPEEETQTRLLPTGPGEETPGTEGSPAP). Residues 83–95 (PTGPGEETPGTEG) are compositionally biased toward low complexity. The helical transmembrane segment at 100 to 124 (QTALSARRFVVLLIFSLYSLVNAFQ) threads the bilayer. The Extracellular portion of the chain corresponds to 125 to 142 (WIQYSVISNVFEGFYGVS). The helical transmembrane segment at 143-170 (SLHIDWLSMVYMLAYVPLIFPATWLLDT) threads the bilayer. The Cytoplasmic portion of the chain corresponds to 171-172 (RG). A helical transmembrane segment spans residues 173 to 192 (LRLTALLGSGLNCLGAWVKC). Residues 193–199 (ASVQQHL) lie on the Extracellular side of the membrane. Residues 200–228 (FWVTMLGQCLCSVAQVFILGLPSRIASVW) traverse the membrane as a helical segment. Residue glutamine 214 coordinates ethanolamine. The Cytoplasmic portion of the chain corresponds to 229 to 233 (FGPKE). Residues 234-259 (VSTACATAVLGNQLGAAIGFLLPPVL) form a helical membrane-spanning segment. The Extracellular portion of the chain corresponds to 260–265 (VPNTQN). Asparagine 265 carries an N-linked (GlcNAc...) asparagine glycan. A helical membrane pass occupies residues 266–295 (NTDLLACNISTMFYGTSSVATFLCFLTIIA). The Cytoplasmic segment spans residues 296 to 331 (FKEKPQYPPSQAQAALQNSPPAKYSYKKSIRNLFRN). A helical membrane pass occupies residues 332-362 (VPFVLLLITYGIITGAFYSVSTLLNQMILTY). Residues 363-366 (YKGE) are Extracellular-facing. Residues 367–395 (EVSAGKIGLTLVVAGMVGSILCGFWLDYT) form a helical membrane-spanning segment. Topologically, residues 396–397 (KI) are cytoplasmic. A helical membrane pass occupies residues 398–420 (YKQTTLIVYILSFLGMVIFTFTL). The Extracellular portion of the chain corresponds to 421–423 (DLG). A helical membrane pass occupies residues 424–453 (YGIVVFVTGGVLGFFMTGYLPLGFEFAVEI). Residues 454–461 (TYPESEGT) lie on the Cytoplasmic side of the membrane. Residues 462-487 (SSGLLNAAAQIFGILFTLAQGKLTTD) form a helical membrane-spanning segment. Residue glutamine 471 participates in ethanolamine binding. Glutamine 471 serves as a coordination point for choline. The Extracellular portion of the chain corresponds to 488-489 (YS). A helical transmembrane segment spans residues 490–512 (PKAGNIFLCVWLFLGIILTALIK). At 513-560 (SDLRRHNINIGIANGDIKAVPVEDTVEDSPTDKESKTIVMSKQSESAI) the chain is on the cytoplasmic side. The tract at residues 537–560 (TVEDSPTDKESKTIVMSKQSESAI) is disordered. Serine 541 is modified (phosphoserine). Polar residues predominate over residues 550–560 (IVMSKQSESAI).

It belongs to the major facilitator superfamily. Feline leukemia virus subgroup C receptor (TC 2.A.1.28.1) family.

It localises to the cell membrane. It carries out the reaction choline(out) = choline(in). The enzyme catalyses ethanolamine(in) = ethanolamine(out). It catalyses the reaction heme b(in) = heme b(out). Functionally, uniporter that mediates the transport of extracellular choline and ethanolamine into cells, thereby playing a key role in phospholipid biosynthesis. Choline and ethanolamine are the precursors of phosphatidylcholine and phosphatidylethanolamine, respectively, the two most abundant phospholipids. Transport is not coupled with proton transport and is exclusively driven by the choline (or ethanolamine) gradient across the plasma membrane. Also acts as a heme b transporter that mediates heme efflux from the cytoplasm to the extracellular compartment. Its function is as follows. (Microbial infection) Confers susceptibility to Feline leukemia virus subgroup C (FeLV-C) infection, which is associated with fatal erythroid aplasia, also known as aplastic anemia. The protein is Choline/ethanolamine transporter FLVCR1 (FLVCR1) of Felis catus (Cat).